The chain runs to 553 residues: Putative transport protein YidE (553 aa).

A run of 5 helical transmembrane segments spans residues Ile4–Val24, Gly28–Ser48, Phe65–Ser85, Leu95–Phe115, and Met158–Leu178. RCK C-terminal domains lie at Gln191 to Gln276 and Asp279 to Asn361. Transmembrane regions (helical) follow at residues Met371–Val391, Gly393–Leu413, Ile439–Val459, Leu464–Leu484, Tyr493–Ala513, and Leu533–Gly553.

Belongs to the AAE transporter (TC 2.A.81) family. YidE subfamily.

Its subcellular location is the cell membrane. This is Putative transport protein YidE from Shigella flexneri serotype 5b (strain 8401).